The sequence spans 651 residues: Probable replication restart protein PriA (651 aa).

C371, C374, C380, C383, C399, C402, C411, and C414 together coordinate Zn(2+).

Belongs to the helicase family. PriA subfamily. In terms of assembly, component of the replication restart primosome. The cofactor is Zn(2+).

Its function is as follows. Initiates the restart of stalled replication forks, which reloads the replicative helicase on sites other than the origin of replication. Recognizes and binds to abandoned replication forks and remodels them to uncover a helicase loading site. Promotes assembly of the primosome at these replication forks. In Mycobacterium leprae (strain TN), this protein is Probable replication restart protein PriA.